A 126-amino-acid chain; its full sequence is Probable glycine cleavage system H protein (126 aa).

The Lipoyl-binding domain occupies 24 to 106 (VVRVGITDFA…FGDGWLLEVE (83 aa)). N6-lipoyllysine is present on K65.

It belongs to the GcvH family. In terms of assembly, the glycine cleavage system is composed of four proteins: P, T, L and H. Requires (R)-lipoate as cofactor.

Functionally, the glycine cleavage system catalyzes the degradation of glycine. The H protein shuttles the methylamine group of glycine from the P protein to the T protein. This chain is Probable glycine cleavage system H protein, found in Natronomonas pharaonis (strain ATCC 35678 / DSM 2160 / CIP 103997 / JCM 8858 / NBRC 14720 / NCIMB 2260 / Gabara) (Halobacterium pharaonis).